Reading from the N-terminus, the 358-residue chain is MSGNTFGKAFRVTTWGESHGPAVGAVVDGCPPGIPLTEEAIQVMMDRRKPGSSAASTTRKEEDLVHILSGVFEGLTTGTPISLMIKNKDAKSSSYDQFKNLFRPGHGDLSYQRKYGIRDYKGGGRASARETAGRVAAGAVAGLLLERVGIKTFAYTLELGSVRAKNIDPEAVSKNPFACPDMEAAEKMEARVNEVRKDGDSLGGIVQVQAAGVPAGLGEPVFDKLDAQIAKAMMSIGAVKGVEIGAGFEAARLTGSVNNDPILEDGFETNNAGGTLSGVSSGQDIVVRVAVKPIPSISVPQQTIGLDGKADTIQVGGRHDISAIPRVNVVCEAMLNLVLADFVLRQAQVRALELFAKQ.

R48 serves as a coordination point for NADP(+). Residues 125–127 (RAS), S277, 292–296 (KPIPS), and R318 each bind FMN.

The protein belongs to the chorismate synthase family. Homotetramer. It depends on FMNH2 as a cofactor.

It carries out the reaction 5-O-(1-carboxyvinyl)-3-phosphoshikimate = chorismate + phosphate. It functions in the pathway metabolic intermediate biosynthesis; chorismate biosynthesis; chorismate from D-erythrose 4-phosphate and phosphoenolpyruvate: step 7/7. Its function is as follows. Catalyzes the anti-1,4-elimination of the C-3 phosphate and the C-6 proR hydrogen from 5-enolpyruvylshikimate-3-phosphate (EPSP) to yield chorismate, which is the branch point compound that serves as the starting substrate for the three terminal pathways of aromatic amino acid biosynthesis. This reaction introduces a second double bond into the aromatic ring system. This Desulfatibacillum aliphaticivorans protein is Chorismate synthase.